The primary structure comprises 86 residues: Large ribosomal subunit protein bL27 (86 aa).

The interval 1–24 (MAHKKAGGSTRNGRDSESKRLGVK) is disordered.

The protein belongs to the bacterial ribosomal protein bL27 family.

This Alcanivorax borkumensis (strain ATCC 700651 / DSM 11573 / NCIMB 13689 / SK2) protein is Large ribosomal subunit protein bL27.